An 813-amino-acid chain; its full sequence is Leucine--tRNA ligase (813 aa).

A 'HIGH' region motif is present at residues S40–H51. Residues K572–S576 carry the 'KMSKS' region motif. An ATP-binding site is contributed by K575.

This sequence belongs to the class-I aminoacyl-tRNA synthetase family.

It localises to the cytoplasm. It carries out the reaction tRNA(Leu) + L-leucine + ATP = L-leucyl-tRNA(Leu) + AMP + diphosphate. This is Leucine--tRNA ligase from Clostridium botulinum (strain Langeland / NCTC 10281 / Type F).